We begin with the raw amino-acid sequence, 177 residues long: Shikimate kinase (177 aa).

An ATP-binding site is contributed by 17–22; the sequence is GAGKST. Serine 21 contributes to the Mg(2+) binding site. Residues aspartate 39, arginine 63, and glycine 85 each coordinate substrate. Arginine 123 is an ATP binding site. Arginine 142 provides a ligand contact to substrate. Residue arginine 160 participates in ATP binding.

Belongs to the shikimate kinase family. As to quaternary structure, monomer. Mg(2+) is required as a cofactor.

The protein localises to the cytoplasm. The enzyme catalyses shikimate + ATP = 3-phosphoshikimate + ADP + H(+). It functions in the pathway metabolic intermediate biosynthesis; chorismate biosynthesis; chorismate from D-erythrose 4-phosphate and phosphoenolpyruvate: step 5/7. Its function is as follows. Catalyzes the specific phosphorylation of the 3-hydroxyl group of shikimic acid using ATP as a cosubstrate. The polypeptide is Shikimate kinase (Halorhodospira halophila (strain DSM 244 / SL1) (Ectothiorhodospira halophila (strain DSM 244 / SL1))).